Consider the following 449-residue polypeptide: Uric acid permease PucJ (449 aa).

13 helical membrane-spanning segments follow: residues 11–31, 41–61, 67–87, 91–111, 119–139, 158–178, 191–211, 229–249, 277–297, 313–333, 334–354, 372–392, and 401–421; these read LSLQ…LLVG, LSYL…LQTL, GIGL…MIAI, YGIH…FLFA, VLFP…SLVP, EYGS…ILVL, VLIG…VSFS, APAF…VIIV, AEGI…NTFA, IVVT…IAAL, ASAV…GMVI, LLTI…PGIF, and ILVS…NLFF.

This sequence belongs to the nucleobase:cation symporter-2 (NCS2) (TC 2.A.40) family.

The protein localises to the cell membrane. Functionally, uptake of uric acid. The chain is Uric acid permease PucJ (pucJ) from Bacillus subtilis (strain 168).